A 455-amino-acid chain; its full sequence is MALWGGRFQGETSALFKLFNDSLPVDYRLFEQDVVGSIAWADAIASVGIITATECSDLKKALNELLVEVKGDPAIILASGAEDIHSFVESALIAKVGDLGKKLHTGRSRNDQVATDLKLWCQSEGAALVARLQTLRSELIALAEREFDAVMPGYTHLQRAQPVTFGHWCLAYVEMIERDLSRLTDALKRANTCPLGSGALAGTAYQMDRHALAAALNFASPTLNSLDSVSDRDHVVELCSTASISMMHLSRMAEDLIFFNSGEAGFISLSDEVTSGSSLMPQKKNPDALELIRGKTGRVYGSLVGILTTMKALPLAYNKDMQEDKEGLFDVVDSWAICLDMAALVLSGLVVNRPNALLAAQQGYANATELADYLVSKGMPFREAHHVVGVAVVAAIAKKIPLEGFTLAEFKTFADIIEDDVYPNLTIEACLAKRDVLGGTALAQVKQAIAAKNAG.

This sequence belongs to the lyase 1 family. Argininosuccinate lyase subfamily.

The protein resides in the cytoplasm. The enzyme catalyses 2-(N(omega)-L-arginino)succinate = fumarate + L-arginine. It participates in amino-acid biosynthesis; L-arginine biosynthesis; L-arginine from L-ornithine and carbamoyl phosphate: step 3/3. This is Argininosuccinate lyase from Shewanella sp. (strain MR-4).